Reading from the N-terminus, the 102-residue chain is MSTQVAEQITFDPDVSWRLHHQVAVRPEPFGALLYHFGTRKLSFLKNRTVVEVVNSLADHPDARSALCAAGVADDQQAPYLHALGVLVQSNMLVPGNPEGSQ.

Belongs to the peptide chaperone MftB family.

Peptide chaperone involved in the biosynthesis of the enzyme cofactor mycofactocin (MFT). Binds MftA and MftC with high affinity, and is essential for MftC activity on MftA, likely via the formation of a ternary complex. Is required for the in vivo ethanol assimilation in M.smegmatis. The sequence is that of Peptide chaperone MftB from Mycolicibacterium smegmatis (strain ATCC 700084 / mc(2)155) (Mycobacterium smegmatis).